Reading from the N-terminus, the 701-residue chain is Reverse gyrase subunit A (701 aa).

The Toprim domain maps to 41–197 (MVLFIVESPN…NIYRAEFHEV (157 aa)). E47 provides a ligand contact to Mg(2+). An RG C-terminal-type zinc finger spans residues 117–143 (IKKCLDCGHQFVDEDKCPRCGSENIDD). 4 residues coordinate Zn(2+): C120, C123, C133, and C136. Residue D166 coordinates Mg(2+). The Topo IA-type catalytic domain maps to 213–602 (NTNRVKAQLV…SFKKELIEIW (390 aa)). Residue Y352 is the O-(5'-phospho-DNA)-tyrosine intermediate of the active site.

Belongs to the type IA topoisomerase family. As to quaternary structure, heterodimer of an RgyA and RgyB subunit. It depends on Zn(2+) as a cofactor. Requires Mg(2+) as cofactor.

It is found in the cytoplasm. In terms of biological role, modifies the topological state of DNA by introducing positive supercoils in an ATP-dependent process. Binds to single-stranded DNA, transiently cleaves and then rejoins the end, introducing a positive supercoil in the process. The scissile phosphodiester is attacked by the catalytic tyrosine of the enzyme, resulting in the formation of a DNA-(5'-phosphotyrosyl)-enzyme intermediate. Probably involved in rewinding DNA strands in regions of the chromosome that have opened up to allow replication, transcription, DNA repair or for DNA protection. Reconstituted holoenzyme binds dsDNA a bit better than ssDNA, this subunit preferentially binds ssDNA. In isolation this subunit relaxes negatively-supercoiled DNA, and stimulates the endogenous ATPase activity of the RgyB subunit. The chain is Reverse gyrase subunit A from Nanoarchaeum equitans (strain Kin4-M).